The sequence spans 367 residues: MLTTTGTLTHQKIGDFYTEAGATLHDVTIAYQAWGHYTGTNLIVLEHALTGDSNAISWWDGLIGPGKALDTNRYCILCTNVLGGCKGSTGPSSPHPDGKPWGSRFPALSIRDLVNAEKQLFDHLGINKIHAIIGGSMGGARTLEWAALHPHMMTTGFVIAVSARASAWQIGIQTAQISAIELDPHWNGGDYYSGHAPWEGIAAARRIAHLTYRGELEIDERFGTSAQHGENPLGPFRDPHQRFAVTSYLQHQGIKLAQRFDAGSYVVLTEALNRHDIGRGRGGLNKALSAITVPIMIAGVDTDILYPYHQQEHLSRNLGNLLAMAKISSPVGHDAFLTEFRQMERILRHFMELSEGIDDSFRTKLER.

Positions N41 to E339 constitute an AB hydrolase-1 domain. The active-site Nucleophile is the S136. R205 is a binding site for substrate. Residues D303 and H333 contribute to the active site. A substrate-binding site is contributed by D334.

It belongs to the AB hydrolase superfamily. MetX family. As to quaternary structure, homodimer.

The protein resides in the cytoplasm. The enzyme catalyses L-homoserine + acetyl-CoA = O-acetyl-L-homoserine + CoA. It functions in the pathway amino-acid biosynthesis; L-methionine biosynthesis via de novo pathway; O-acetyl-L-homoserine from L-homoserine: step 1/1. Its function is as follows. Transfers an acetyl group from acetyl-CoA to L-homoserine, forming acetyl-L-homoserine. The polypeptide is Homoserine O-acetyltransferase (Corynebacterium diphtheriae (strain ATCC 700971 / NCTC 13129 / Biotype gravis)).